The chain runs to 248 residues: GTP cyclohydrolase 1 type 2 homolog (248 aa).

Positions 64, 65, 101, 216, and 220 each coordinate a divalent metal cation.

The protein belongs to the GTP cyclohydrolase I type 2/NIF3 family. In terms of assembly, homohexamer.

The chain is GTP cyclohydrolase 1 type 2 homolog from Borreliella burgdorferi (strain ATCC 35210 / DSM 4680 / CIP 102532 / B31) (Borrelia burgdorferi).